We begin with the raw amino-acid sequence, 188 residues long: Dual specificity protein phosphatase 18 (188 aa).

One can recognise a Tyrosine-protein phosphatase domain in the interval 19-160 (GLSQITKSLF…LIHYELQLFG (142 aa)). Residues 95–141 (MQKGRTLLHCAAGVSRSAALCLAYLMKYHAMSLVDAHTWTKSCRPII) are sufficient for mitochondrial localization. The active-site Phosphocysteine intermediate is C104.

This sequence belongs to the protein-tyrosine phosphatase family. Non-receptor class dual specificity subfamily.

The protein resides in the cytoplasm. The protein localises to the nucleus. Its subcellular location is the mitochondrion inner membrane. The enzyme catalyses O-phospho-L-tyrosyl-[protein] + H2O = L-tyrosyl-[protein] + phosphate. It carries out the reaction O-phospho-L-seryl-[protein] + H2O = L-seryl-[protein] + phosphate. The catalysed reaction is O-phospho-L-threonyl-[protein] + H2O = L-threonyl-[protein] + phosphate. Can dephosphorylate single and diphosphorylated synthetic MAPK peptides, with preference for the phosphotyrosine and diphosphorylated forms over phosphothreonine. In vitro, dephosphorylates p-nitrophenyl phosphate (pNPP). This chain is Dual specificity protein phosphatase 18 (Dusp18), found in Mus musculus (Mouse).